Reading from the N-terminus, the 538-residue chain is MAGELKVLNALDSAKTQWYHFTAIVIAGMGFFTDAYDLFSISLVTKLLGRIYYFNPASKSPGSLPPNVSAAVNGVAFCGTLAGQLFFGWLGDKMGRKKVYGMTLMLMVICCLASGLSFGSSAKGVMATLCFFRFWLGFGIGGDYPLSATIMSEYANKRTRGAFIAAVFAMQGFGNLTGGIVAIIVSAAFKARFDAPAYRDDRAGSTVPQADYAWRIVLMFGAIPALLTYYWRMKMPETARYTALVAKNAKQAAADMTQVLNVEIVEEQEKADEVARREQFGLFSRQFLRRHGRHLLGTTVCWFVLDIAFYSSNLFQKDIYTAVQWLPKADTMSALEEMFKISRAQTLVALCGTIPGYWFTVFFIDIIGRFVIQLGGFFFMTAFMLGLAVPYHHWTTPGNHIGFVVMYAFTFFFANFGPNSTTFIVPAEIFPARLRSTCHGISAAAGKAGAIVGSFGFLYAAQSTDASKTDAGYPPGIGVRNSLFFLAGCNVIGFFFTFLVPESKGKSLEELSGENEDDDDVPEAPSTADHRTAPAPPA.

Residues 1–23 (MAGELKVLNALDSAKTQWYHFTA) are Cytoplasmic-facing. Residues 24–44 (IVIAGMGFFTDAYDLFSISLV) form a helical membrane-spanning segment. At 45–69 (TKLLGRIYYFNPASKSPGSLPPNVS) the chain is on the extracellular side. The chain crosses the membrane as a helical span at residues 70–90 (AAVNGVAFCGTLAGQLFFGWL). At 91–98 (GDKMGRKK) the chain is on the cytoplasmic side. A helical membrane pass occupies residues 99-119 (VYGMTLMLMVICCLASGLSFG). Residues 120-123 (SSAK) lie on the Extracellular side of the membrane. Residues 124 to 144 (GVMATLCFFRFWLGFGIGGDY) traverse the membrane as a helical segment. Over 145-163 (PLSATIMSEYANKRTRGAF) the chain is Cytoplasmic. A helical membrane pass occupies residues 164 to 184 (IAAVFAMQGFGNLTGGIVAII). At 185 to 210 (VSAAFKARFDAPAYRDDRAGSTVPQA) the chain is on the extracellular side. Residues 211-231 (DYAWRIVLMFGAIPALLTYYW) traverse the membrane as a helical segment. Topologically, residues 232-294 (RMKMPETARY…RQFLRRHGRH (63 aa)) are cytoplasmic. The helical transmembrane segment at 295–315 (LLGTTVCWFVLDIAFYSSNLF) threads the bilayer. Residues 316 to 346 (QKDIYTAVQWLPKADTMSALEEMFKISRAQT) are Extracellular-facing. Residues 347–367 (LVALCGTIPGYWFTVFFIDII) form a helical membrane-spanning segment. Topologically, residues 368-369 (GR) are cytoplasmic. The chain crosses the membrane as a helical span at residues 370–390 (FVIQLGGFFFMTAFMLGLAVP). Over 391–396 (YHHWTT) the chain is Extracellular. A helical membrane pass occupies residues 397 to 417 (PGNHIGFVVMYAFTFFFANFG). At 418–440 (PNSTTFIVPAEIFPARLRSTCHG) the chain is on the cytoplasmic side. Residues 441 to 461 (ISAAAGKAGAIVGSFGFLYAA) form a helical membrane-spanning segment. The Extracellular segment spans residues 462–481 (QSTDASKTDAGYPPGIGVRN). The helical transmembrane segment at 482–502 (SLFFLAGCNVIGFFFTFLVPE) threads the bilayer. The Cytoplasmic portion of the chain corresponds to 503–538 (SKGKSLEELSGENEDDDDVPEAPSTADHRTAPAPPA). The interval 507–538 (SLEELSGENEDDDDVPEAPSTADHRTAPAPPA) is disordered. Positions 511–522 (LSGENEDDDDVP) are enriched in acidic residues.

It belongs to the major facilitator superfamily. Phosphate:H(+) symporter (TC 2.A.1.9) family.

It localises to the membrane. High-affinity transporter for external inorganic phosphate. In Oryza sativa subsp. indica (Rice), this protein is Probable inorganic phosphate transporter 1-4 (PHT1-4).